The chain runs to 237 residues: Aspartate/glutamate leucyltransferase (237 aa).

The protein belongs to the R-transferase family. Bpt subfamily.

The protein resides in the cytoplasm. It catalyses the reaction N-terminal L-glutamyl-[protein] + L-leucyl-tRNA(Leu) = N-terminal L-leucyl-L-glutamyl-[protein] + tRNA(Leu) + H(+). The catalysed reaction is N-terminal L-aspartyl-[protein] + L-leucyl-tRNA(Leu) = N-terminal L-leucyl-L-aspartyl-[protein] + tRNA(Leu) + H(+). In terms of biological role, functions in the N-end rule pathway of protein degradation where it conjugates Leu from its aminoacyl-tRNA to the N-termini of proteins containing an N-terminal aspartate or glutamate. This Shewanella amazonensis (strain ATCC BAA-1098 / SB2B) protein is Aspartate/glutamate leucyltransferase.